Reading from the N-terminus, the 178-residue chain is MAETRTIARPYAEAVFKLAKNQNDLARWADTLQLAAAVAADENVRSLIGNPKISSRKLGELFLSVCGNRLNEEGRNFILLLAENGRLEILPEVNELYEQLKTRHEGVLDAKVISAFAMSDAQLKDLVTDLEAKFKRKIEAKVSVDADLIGGVIVEIGDEVLDASVRGKLEAMAVALKS.

The protein belongs to the ATPase delta chain family. As to quaternary structure, F-type ATPases have 2 components, F(1) - the catalytic core - and F(0) - the membrane proton channel. F(1) has five subunits: alpha(3), beta(3), gamma(1), delta(1), epsilon(1). F(0) has three main subunits: a(1), b(2) and c(10-14). The alpha and beta chains form an alternating ring which encloses part of the gamma chain. F(1) is attached to F(0) by a central stalk formed by the gamma and epsilon chains, while a peripheral stalk is formed by the delta and b chains.

The protein localises to the cell inner membrane. Functionally, f(1)F(0) ATP synthase produces ATP from ADP in the presence of a proton or sodium gradient. F-type ATPases consist of two structural domains, F(1) containing the extramembraneous catalytic core and F(0) containing the membrane proton channel, linked together by a central stalk and a peripheral stalk. During catalysis, ATP synthesis in the catalytic domain of F(1) is coupled via a rotary mechanism of the central stalk subunits to proton translocation. Its function is as follows. This protein is part of the stalk that links CF(0) to CF(1). It either transmits conformational changes from CF(0) to CF(1) or is implicated in proton conduction. The sequence is that of ATP synthase subunit delta from Nitrosospira multiformis (strain ATCC 25196 / NCIMB 11849 / C 71).